The sequence spans 541 residues: Chaperonin GroEL 2 (541 aa).

Residues 29 to 32 (TLGP), 86 to 90 (DGTTT), Gly413, 476 to 478 (NAA), and Asp492 contribute to the ATP site.

It belongs to the chaperonin (HSP60) family. As to quaternary structure, forms a cylinder of 14 subunits composed of two heptameric rings stacked back-to-back. Interacts with the co-chaperonin GroES.

The protein localises to the cytoplasm. It carries out the reaction ATP + H2O + a folded polypeptide = ADP + phosphate + an unfolded polypeptide.. Its function is as follows. Together with its co-chaperonin GroES, plays an essential role in assisting protein folding. The GroEL-GroES system forms a nano-cage that allows encapsulation of the non-native substrate proteins and provides a physical environment optimized to promote and accelerate protein folding. This is Chaperonin GroEL 2 from Streptomyces avermitilis (strain ATCC 31267 / DSM 46492 / JCM 5070 / NBRC 14893 / NCIMB 12804 / NRRL 8165 / MA-4680).